A 430-amino-acid polypeptide reads, in one-letter code: Nitroalkane oxidase (430 aa).

FAD contacts are provided by residues 132 to 135, 140 to 142, 170 to 172, Arg301, Gln311, 372 to 376, and 397 to 401; these read LVFS, VAN, WAT, NAVGI, and IFDGG. The active-site Proton acceptor is the Asp399.

Belongs to the acyl-CoA dehydrogenase family. Homotetramer. Requires FAD as cofactor.

The catalysed reaction is a primary nitroalkane + O2 + H2O = an aldehyde + nitrite + H2O2 + H(+). It catalyses the reaction a secondary nitroalkane + O2 + H2O = a ketone + nitrite + H2O2 + H(+). Nitroalkane oxidase (NAO) catalyzes the oxidation of nitroalkanes to the corresponding aldehydes or ketones with the release of nitrite and the consumption of molecular oxygen to yield hydrogen peroxide. NAO is unusual, since it catalyzes substrate oxidation by removing a substrate proton to form a carbanion intermediate. Prefers longer nitroalkanes, with 1-nitrohexane having the highest activity. This chain is Nitroalkane oxidase, found in Podospora anserina (strain S / ATCC MYA-4624 / DSM 980 / FGSC 10383) (Pleurage anserina).